The primary structure comprises 376 residues: Immunoglobulin G-binding protein H (376 aa).

Positions 1 to 41 (MTRQQTKKNYSLRKLKTGTASVAVALTVLGAGFANQTTVKA) are cleaved as a signal peptide. Residues 69-271 (TSLENEKLKS…AAKKELEANH (203 aa)) form a disordered region. Basic and acidic residues-rich tracts occupy residues 72-146 (ENEK…KRYQ), 156-203 (ETEK…DKQI), 211-245 (LSRD…DKQI), and 253-271 (LSRD…EANH). C repeat units follow at residues 153-187 (QQLE…EAEH), 195-229 (QKLK…EANH), and 237-271 (QKLK…EANH). D repeat units lie at residues 272–277 (QKLEAE), 278–283 (AKALKE), 286–291 (AKQAEE), and 293–298 (AKLRAG). The disordered stretch occupies residues 292 to 348 (LAKLRAGKASDSQTPDTKPGNKAVPGKGQAPQAGTKPNQNKAPMKETKRQLPSTGET). Positions 342–346 (LPSTG) match the LPXTG sorting signal motif. Thr-345 bears the Pentaglycyl murein peptidoglycan amidated threonine mark. Residues 346–376 (GETANPFFTAAALTVMATAGVAAVVKRKEEN) constitute a propeptide, removed by sortase.

It belongs to the M protein family.

It localises to the secreted. The protein resides in the cell wall. The chain is Immunoglobulin G-binding protein H from Streptococcus pyogenes serotype M1.